The primary structure comprises 306 residues: Pyridoxal 5'-phosphate synthase subunit PdxS (306 aa).

Residue Asp-36 coordinates D-ribose 5-phosphate. Lys-93 functions as the Schiff-base intermediate with D-ribose 5-phosphate in the catalytic mechanism. Residue Gly-165 participates in D-ribose 5-phosphate binding. Arg-177 is a D-glyceraldehyde 3-phosphate binding site. D-ribose 5-phosphate-binding positions include Gly-226 and Gly-247–Ser-248.

Belongs to the PdxS/SNZ family. In terms of assembly, in the presence of PdxT, forms a dodecamer of heterodimers.

The enzyme catalyses aldehydo-D-ribose 5-phosphate + D-glyceraldehyde 3-phosphate + L-glutamine = pyridoxal 5'-phosphate + L-glutamate + phosphate + 3 H2O + H(+). The protein operates within cofactor biosynthesis; pyridoxal 5'-phosphate biosynthesis. Catalyzes the formation of pyridoxal 5'-phosphate from ribose 5-phosphate (RBP), glyceraldehyde 3-phosphate (G3P) and ammonia. The ammonia is provided by the PdxT subunit. Can also use ribulose 5-phosphate and dihydroxyacetone phosphate as substrates, resulting from enzyme-catalyzed isomerization of RBP and G3P, respectively. This Salinispora tropica (strain ATCC BAA-916 / DSM 44818 / JCM 13857 / NBRC 105044 / CNB-440) protein is Pyridoxal 5'-phosphate synthase subunit PdxS.